A 162-amino-acid polypeptide reads, in one-letter code: Ribonuclease P protein component (162 aa).

Residues 1-63 (MDEKDLATQP…PPAAGGKLLS (63 aa)) form a disordered region. A compositionally biased stretch (basic and acidic residues) spans 21–38 (GPHEDPRRQEGVEAEKAE).

The protein belongs to the RnpA family. As to quaternary structure, consists of a catalytic RNA component (M1 or rnpB) and a protein subunit.

It carries out the reaction Endonucleolytic cleavage of RNA, removing 5'-extranucleotides from tRNA precursor.. Its function is as follows. RNaseP catalyzes the removal of the 5'-leader sequence from pre-tRNA to produce the mature 5'-terminus. It can also cleave other RNA substrates such as 4.5S RNA. The protein component plays an auxiliary but essential role in vivo by binding to the 5'-leader sequence and broadening the substrate specificity of the ribozyme. The protein is Ribonuclease P protein component of Thermus scotoductus.